The following is a 232-amino-acid chain: Large ribosomal subunit protein uL10c (232 aa).

The transit peptide at 1–52 (MESTLFLSKPLPTTIKTTTHSLSSVYPNPFKPNNLTFPRTTHKHPTTTTITA) directs the protein to the chloroplast.

Belongs to the universal ribosomal protein uL10 family. As to quaternary structure, component of the chloroplast large ribosomal subunit (LSU). Mature 70S chloroplast ribosomes of higher plants consist of a small (30S) and a large (50S) subunit. The 30S small subunit contains 1 molecule of ribosomal RNA (16S rRNA) and 24 different proteins. The 50S large subunit contains 3 rRNA molecules (23S, 5S and 4.5S rRNA) and 33 different proteins.

The protein localises to the plastid. Its subcellular location is the chloroplast. In terms of biological role, component of the chloroplast ribosome (chloro-ribosome), a dedicated translation machinery responsible for the synthesis of chloroplast genome-encoded proteins, including proteins of the transcription and translation machinery and components of the photosynthetic apparatus. The protein is Large ribosomal subunit protein uL10c (RPL10) of Spinacia oleracea (Spinach).